The following is a 209-amino-acid chain: Large ribosomal subunit protein uL3 (209 aa).

The tract at residues 128–163 (FGGGSRTHGQSDRLRAPGSVGGSSDPSRTFRGTRMA) is disordered.

Belongs to the universal ribosomal protein uL3 family. As to quaternary structure, part of the 50S ribosomal subunit. Forms a cluster with proteins L14 and L19.

Functionally, one of the primary rRNA binding proteins, it binds directly near the 3'-end of the 23S rRNA, where it nucleates assembly of the 50S subunit. The protein is Large ribosomal subunit protein uL3 of Chlorobium phaeobacteroides (strain DSM 266 / SMG 266 / 2430).